We begin with the raw amino-acid sequence, 87 residues long: Phosphoribosyl-ATP pyrophosphatase (87 aa).

It belongs to the PRA-PH family.

The protein resides in the cytoplasm. It catalyses the reaction 1-(5-phospho-beta-D-ribosyl)-ATP + H2O = 1-(5-phospho-beta-D-ribosyl)-5'-AMP + diphosphate + H(+). It participates in amino-acid biosynthesis; L-histidine biosynthesis; L-histidine from 5-phospho-alpha-D-ribose 1-diphosphate: step 2/9. This Kocuria rhizophila (strain ATCC 9341 / DSM 348 / NBRC 103217 / DC2201) protein is Phosphoribosyl-ATP pyrophosphatase.